The sequence spans 402 residues: Fugralins biosynthesis cluster protein 2 (402 aa).

A run of 5 helical transmembrane segments spans residues 28–48, 109–129, 145–165, 232–252, and 264–284; these read NCLAYTVLILCAVITTICFLL, ILIFGVCYSFVLPFLKIAILV, IFWWGCMVIGFVQATSNTAIV, VIFGLGLLACVSAAVRLAVTV, and LAPLVFWATAEMTCGFFIVCV. Disordered regions lie at residues 312 to 335 and 378 to 402; these read NPNTADRYAKSGTKGSQLSSTGPK and TQDNRSTSDSEGHAAFPASQKPWGV. Residues 324 to 334 are compositionally biased toward polar residues; sequence TKGSQLSSTGP. Residue Asn381 is glycosylated (N-linked (GlcNAc...) asparagine).

This sequence belongs to the SAT4 family.

The protein localises to the membrane. It functions in the pathway secondary metabolite biosynthesis. Functionally, part of the gene cluster that mediates the biosynthesis of the tetraketides fugralins such as linear fugralin A and cyclic fugralin B, volatile compounds that play a role in the asexual reproductive cycle but are not involved in pathogenicity. One of the key features of fugralins is the presence of a double methyl group, which is only rarely encountered in fungal secondary metabolites. As the fugralins cluster does not contain an independent methyltransferase, the PKS FGR1 is probably responsible for adding two methyl groups to the same carbon atom. Fugralin B is similar to fugralin A except for a cyclization between the carboxylic acid C-8 and the alcohol on C-4 resulting in a six membered lactone ring, probably catalyzed by the cyclase FGR4. The exact role of the individual cluster genes remains unknown and further work is needed to unravel the biosynthetic pathway. The sequence is that of Fugralins biosynthesis cluster protein 2 from Gibberella zeae (strain ATCC MYA-4620 / CBS 123657 / FGSC 9075 / NRRL 31084 / PH-1) (Wheat head blight fungus).